We begin with the raw amino-acid sequence, 42 residues long: Purine nucleoside phosphorylase DeoD-type (42 aa).

8-9 lines the a purine D-ribonucleoside pocket; sequence SD. The active-site Proton donor is Asp9.

The protein belongs to the PNP/UDP phosphorylase family. As to quaternary structure, homohexamer; trimer of homodimers.

The catalysed reaction is a purine D-ribonucleoside + phosphate = a purine nucleobase + alpha-D-ribose 1-phosphate. The enzyme catalyses a purine 2'-deoxy-D-ribonucleoside + phosphate = a purine nucleobase + 2-deoxy-alpha-D-ribose 1-phosphate. Functionally, catalyzes the reversible phosphorolytic breakdown of the N-glycosidic bond in the beta-(deoxy)ribonucleoside molecules, with the formation of the corresponding free purine bases and pentose-1-phosphate. The sequence is that of Purine nucleoside phosphorylase DeoD-type from Mycoplasmoides pirum (Mycoplasma pirum).